Here is a 433-residue protein sequence, read N- to C-terminus: Enolase (433 aa).

Gln-167 is a binding site for (2R)-2-phosphoglycerate. Residue Glu-209 is the Proton donor of the active site. Asp-246, Glu-291, and Asp-318 together coordinate Mg(2+). (2R)-2-phosphoglycerate-binding residues include Lys-343, Arg-372, Ser-373, and Lys-394. The Proton acceptor role is filled by Lys-343.

It belongs to the enolase family. In terms of assembly, component of the RNA degradosome, a multiprotein complex involved in RNA processing and mRNA degradation. The cofactor is Mg(2+).

The protein localises to the cytoplasm. It localises to the secreted. The protein resides in the cell surface. The catalysed reaction is (2R)-2-phosphoglycerate = phosphoenolpyruvate + H2O. The protein operates within carbohydrate degradation; glycolysis; pyruvate from D-glyceraldehyde 3-phosphate: step 4/5. Catalyzes the reversible conversion of 2-phosphoglycerate (2-PG) into phosphoenolpyruvate (PEP). It is essential for the degradation of carbohydrates via glycolysis. The sequence is that of Enolase from Aeromonas salmonicida (strain A449).